The chain runs to 412 residues: Vacuolar calcium ion transporter (412 aa).

Residues 1 to 55 are Cytoplasmic-facing; that stretch reads MIERLKIAKNRLEAMNSFNFPAQDRHERAPLLGSEYDHSMARQLSLLNVVGMTKS. A helical membrane pass occupies residues 56–76; the sequence is VLMSSYFNLMLVFVPIGLIAG. At 77–83 the chain is on the lumenal side; the sequence is WFEWNAK. A helical membrane pass occupies residues 84 to 104; that stretch reads SVFILNMLAIIPLASLLSFAT. Residues 105 to 114 are Cytoplasmic-facing; sequence EQLSIISGPT. The helical transmembrane segment at 115–135 threads the bilayer; that stretch reads LGALLNASFGNAIELIVGVLA. Topologically, residues 136–148 are lumenal; the sequence is LKRGELRIVQSSL. Residues 149–169 traverse the membrane as a helical segment; the sequence is LGSILSNLLLVFGMCLVTTGI. At 170–177 the chain is on the cytoplasmic side; that stretch reads RREITTFN. Residues 178–198 form a helical membrane-spanning segment; sequence ITVAQTMIAMLALSTATILIP. Over 199–215 the chain is Lumenal; the sequence is ATFHYSLPDNANSENAL. A helical membrane pass occupies residues 216–236; it reads LHVSRGTAVIVLIVYVLLLVF. Over 237–264 the chain is Cytoplasmic; the sequence is QLKTHKHVCHDPSEVEEETEPRILGLRS. Residues 265-285 traverse the membrane as a helical segment; that stretch reads SIAMLAIVTVFVSLCADYLVG. At 286–299 the chain is on the lumenal side; sequence SIDQLVEEVNISKT. A helical membrane pass occupies residues 300-320; the sequence is FVGLVILPVVGNAAEHVTAIV. Topologically, residues 321–334 are cytoplasmic; that stretch reads VSYRGQMDLALGVA. Residues 335–355 form a helical membrane-spanning segment; the sequence is IGSSIQIALFLAPFLVIVGWI. The Lumenal portion of the chain corresponds to 356–358; that stretch reads ISQ. Residues 359–379 traverse the membrane as a helical segment; sequence PLTLYFESLETVILFVSVFLV. Residues 380 to 389 lie on the Cytoplasmic side of the membrane; the sequence is NYLIQDGATH. Residues 390–410 traverse the membrane as a helical segment; sequence WLEGVQLLALYAIVVLAFFYY. At 411–412 the chain is on the lumenal side; it reads PQ.

The protein belongs to the Ca(2+):cation antiporter (CaCA) (TC 2.A.19) family.

The protein localises to the vacuole membrane. It is found in the endoplasmic reticulum membrane. Has a role in promoting intracellular calcium ion sequestration via the exchange of calcium ions for hydrogen ions across the vacuolar membrane. Involved also in manganese ion homeostasis via its uptake into the vacuole. The chain is Vacuolar calcium ion transporter (vcx1) from Schizosaccharomyces pombe (strain 972 / ATCC 24843) (Fission yeast).